The chain runs to 337 residues: NADH-quinone oxidoreductase subunit H (337 aa).

8 consecutive transmembrane segments (helical) span residues 13 to 33 (IIIVLQCLAIILPMLGAIAYL), 82 to 102 (AVFIIAPLMTFILALIAWAVI), 115 to 135 (VGVLYLFAVSGLGVYGIIMAG), 154 to 174 (MVSYEVAMGLIIIAVILSAGS), 187 to 207 (GVWYFIPHFPMFVMFLVSILA), 248 to 268 (ILMSGITAILFLGGWLPPVDI), 274 to 294 (IPGIIWFFLKIALILFVFLWV), and 313 to 333 (VFLPGSLIWVVLTAGFLVTFD).

Belongs to the complex I subunit 1 family. As to quaternary structure, NDH-1 is composed of 14 different subunits. Subunits NuoA, H, J, K, L, M, N constitute the membrane sector of the complex.

It is found in the cell inner membrane. The enzyme catalyses a quinone + NADH + 5 H(+)(in) = a quinol + NAD(+) + 4 H(+)(out). Functionally, NDH-1 shuttles electrons from NADH, via FMN and iron-sulfur (Fe-S) centers, to quinones in the respiratory chain. The immediate electron acceptor for the enzyme in this species is believed to be ubiquinone. Couples the redox reaction to proton translocation (for every two electrons transferred, four hydrogen ions are translocated across the cytoplasmic membrane), and thus conserves the redox energy in a proton gradient. This subunit may bind ubiquinone. The protein is NADH-quinone oxidoreductase subunit H of Rhodospirillum rubrum (strain ATCC 11170 / ATH 1.1.1 / DSM 467 / LMG 4362 / NCIMB 8255 / S1).